The primary structure comprises 358 residues: U5 small nuclear ribonucleoprotein 40 kDa protein (358 aa).

Lys18 participates in a covalent cross-link: Glycyl lysine isopeptide (Lys-Gly) (interchain with G-Cter in SUMO2). Arg21 carries the asymmetric dimethylarginine modification. WD repeat units lie at residues 65 to 104, 108 to 147, 150 to 190, 192 to 231, 234 to 273, 284 to 323, and 326 to 358; these read GHEG…DNYA, GHSG…RVKR, GHTS…AIQT, QNTY…LTYT, GHAD…PKER, NFEK…ILYK, and GHAG…GEIQ. Lys271 is covalently cross-linked (Glycyl lysine isopeptide (Lys-Gly) (interchain with G-Cter in SUMO2)).

In terms of assembly, component of the pre-catalytic and catalytic spliceosome complexes. Component of the postcatalytic spliceosome P complex. Part of the U5 snRNP complex. Interacts with PRPF8. Component of the U4/U6-U5 tri-snRNP complex composed of the U4, U6 and U5 snRNAs and at least PRPF3, PRPF4, PRPF6, PRPF8, PRPF31, SNRNP200, TXNL4A, WDR57, SNRNP40, DDX23, CD2BP2, PPIH, SNU13, EFTUD2, SART1 and USP39. Component of the minor spliceosome, which splices U12-type introns.

It localises to the nucleus. Functionally, required for pre-mRNA splicing as component of the activated spliceosome. Component of the U5 small nuclear ribonucleoprotein (snRNP) complex and the U4/U6-U5 tri-snRNP complex, building blocks of the spliceosome. As a component of the minor spliceosome, involved in the splicing of U12-type introns in pre-mRNAs. The chain is U5 small nuclear ribonucleoprotein 40 kDa protein (SNRNP40) from Bos taurus (Bovine).